The chain runs to 1151 residues: Calcium-activated potassium channel subunit alpha-1 (1151 aa).

The disordered stretch occupies residues 1-36 (MSSNIHANHLSLDASSSSSSSSSSSSSSSSSSSVHE). Residues 1–59 (MSSNIHANHLSLDASSSSSSSSSSSSSSSSSSSVHEPKMDALIIPVTMEVPCDSRGQRM) are Extracellular-facing. Over residues 15–33 (SSSSSSSSSSSSSSSSSSS) the composition is skewed to low complexity. Residues 60–80 (WWAFLASSMVTFFGGLFIILL) form a helical membrane-spanning segment. At 81–151 (WRTLKYLWTV…MISAQTLTGR (71 aa)) the chain is on the cytoplasmic side. Residues cysteine 91, cysteine 92, and cysteine 94 are each lipidated (S-palmitoyl cysteine). A helical transmembrane segment spans residues 152–172 (VLVVLVFALSIGALVIYFIDS). Over 173–187 (SNPIESCQNFYKDFT) the chain is Extracellular. Residues 188 to 208 (LQIDMAFNVFFLLYFGLRFIA) form a helical membrane-spanning segment. The Cytoplasmic segment spans residues 209-212 (ANDK). The helical transmembrane segment at 213–233 (LWFWLEVNSVVDFFTVPPVFV) threads the bilayer. The Extracellular segment spans residues 234-237 (SVYL). Residues 238–258 (NRSWLGLRFLRALRLIQFSEI) form a helical; Voltage-sensor membrane-spanning segment. The Cytoplasmic segment spans residues 259 to 273 (LQFLNILKTSNSIKL). The chain crosses the membrane as a helical span at residues 274–294 (VNLLSIFISTWLTAAGFIHLV). Residues 295–308 (ENSGDPWENFQNNQ) are Extracellular-facing. The segment at residues 309-331 (ALTYWECVYLLMVTMSTVGYGDV) is an intramembrane region (pore-forming). The Selectivity for potassium signature appears at 325–328 (TVGY). Topologically, residues 332 to 340 (YAKTTLGRL) are extracellular. The helical transmembrane segment at 341–361 (FMVFFILGGLAMFASYVPEII) threads the bilayer. The Cytoplasmic segment spans residues 362-1151 (ELIGNRKKYG…KQKYVQEERL (790 aa)). The RCK N-terminal 1 domain maps to 380–522 (RKHIVVCGHI…WNWKEGDDAI (143 aa)). 3 residues coordinate Mg(2+): glutamate 412, glutamine 435, and glutamate 437. Residues 529 to 549 (LGFIAQSCLAQGLSTMLANLF) form a segment S7 region. Residues 586-606 (LSFPTVCELCFVKLKLLMIAI) are segment S8. The interval 650–654 (CKACH) is heme-binding motif. Residues 674-702 (EQPSTLSPKKKQRNGGMRNSPNSSPKLMR) are disordered. Position 678 is a phosphothreonine (threonine 678). A phosphoserine mark is found at serine 680, serine 693, and serine 697. Positions 752-772 (VLSGHVVVCIFGDVSSALIGL) are segment S9. Residues 754 to 898 (SGHVVVCIFG…MDRSSPDNSP (145 aa)) form the RCK N-terminal 2 domain. A Phosphothreonine modification is found at threonine 885. Phosphoserine occurs at positions 893 and 897. The Calcium bowl motif lies at 918 to 940 (TELVNDTNVQFLDQDDDDDPDTE). The Ca(2+) site is built by glutamine 927, aspartate 930, aspartate 933, and aspartate 935. The segment S10 stretch occupies residues 947–967 (FACGTAFAVSVLDSLMSATYF). A compositionally biased stretch (low complexity) spans 1101–1126 (RASLSHSSHSSQSSSKKSSSVHSIPS). The disordered stretch occupies residues 1101–1151 (RASLSHSSHSSQSSSKKSSSVHSIPSTANRQNRPKSRESRDKQKYVQEERL). A compositionally biased stretch (basic and acidic residues) spans 1135 to 1151 (KSRESRDKQKYVQEERL). 2 positions are modified to phosphoserine: serine 1136 and serine 1139.

It belongs to the potassium channel family. Calcium-activated (TC 1.A.1.3) subfamily. KCa1.1/KCNMA1 sub-subfamily. As to quaternary structure, homotetramer; which constitutes the calcium-activated potassium channel. Interacts with beta subunits KCNMB1, KCNMB2, KCNMB3 and KCNMB4. Interacts with gamma subunits LRRC26, LRRC38, LRRC52 and LRRC55. Beta and gamma subunits are accessory, and modulate its activity. Interacts with RAB11B. Post-translationally, phosphorylated. Phosphorylation by kinases such as PKA and/or PKG. In smooth muscles, phosphorylation affects its activity. Palmitoylation by ZDHHC22 and ZDHHC23 within the intracellular linker between the S0 and S1 transmembrane domains regulates localization to the plasma membrane. Depalmitoylated by LYPLA1 and LYPLAL1, leading to retard exit from the trans-Golgi network.

The protein localises to the cell membrane. The catalysed reaction is K(+)(in) = K(+)(out). With respect to regulation, ethanol and carbon monoxide-bound heme increase channel activation. Heme inhibits channel activation. Its function is as follows. Potassium channel activated by both membrane depolarization or increase in cytosolic Ca(2+) that mediates export of K(+). It is also activated by the concentration of cytosolic Mg(2+). Its activation dampens the excitatory events that elevate the cytosolic Ca(2+) concentration and/or depolarize the cell membrane. It therefore contributes to repolarization of the membrane potential. Plays a key role in controlling excitability in a number of systems, such as regulation of the contraction of smooth muscle, the tuning of hair cells in the cochlea, regulation of transmitter release, and innate immunity. In smooth muscles, its activation by high level of Ca(2+), caused by ryanodine receptors in the sarcoplasmic reticulum, regulates the membrane potential. In cochlea cells, its number and kinetic properties partly determine the characteristic frequency of each hair cell and thereby helps to establish a tonotopic map. Kinetics of KCNMA1 channels are determined by alternative splicing, phosphorylation status and its combination with modulating beta subunits. Highly sensitive to both iberiotoxin (IbTx) and charybdotoxin (CTX). This chain is Calcium-activated potassium channel subunit alpha-1 (KCNMA1), found in Macaca mulatta (Rhesus macaque).